The sequence spans 687 residues: MTAQSLLQTTLFLLSLLFLVQGAHGRGHREDFRFCSQRNQTHRSSLHYKPTADLRISIENSEEALTVHAPFPAARPASQSFPDPRGLYHFCLYWNRHAGRLHLLYGKHDFLLSDKASSLLCFQHQEESLAQGPPLLATSVTSWWSPQNVSLPSAASFTFSFHSPPHTAAHNASVDMCELKRDLQLLSQFLKHPQKASRRPSAAPARQQLQSLESKLTSVRFTGDTVSFEEDRINATVWKLQPTAGLQDLHIHSRQEEEQSEILEYSVLLPRTLFQRTKGRRGEAEKRLLLVDFSSQALFQDKNSSQVLGEKVLGIVVQNTKVANLTEPVVLTFQHQLQPKNVTLQCVFWVEDPTLSSPGHWSSAGCETVRRETQTSCFCNHLTYFAVLMVSSVEVDAVHKHYLSLLSYVGCVVSALACIVTIAAYLCSRRKPRDYTIKVHMNLLLAVFLLDTSFLLSEPVALTGSEAGCRASAIFLHFSLLACLSWMGLEGYNLYRLVVEVFGTYVPGYLLKLSAMGWGFPIFLVTLVALVDVDNYGPIILAVHRTPEGVIYPSMCWIRDSLVSYITNLGLFSLVFLFNMAMLATMVVQILRLRPHTQKWSHVLTLLGLSLVLGLPWALIFFSFASGTFQLVVLYLFSIITSFQGFLIFIWYWSMRLQARGGPSPLKSNSDSARLPISSGSTSSSRI.

The first 25 residues, 1-25 (MTAQSLLQTTLFLLSLLFLVQGAHG), serve as a signal peptide directing secretion. Residue 26–33 (RGHREDFR) coordinates heparin. Over 26–402 (RGHREDFRFC…VEVDAVHKHY (377 aa)) the chain is Extracellular. Disulfide bonds link Cys35–Cys91 and Cys121–Cys177. Asn39, Asn148, and Asn171 each carry an N-linked (GlcNAc...) asparagine glycan. A heparin-binding site is contributed by 190–200 (LKHPQKASRRP). In terms of domain architecture, GAIN-B spans 224-395 (DTVSFEEDRI…AVLMVSSVEV (172 aa)). N-linked (GlcNAc...) asparagine glycans are attached at residues Asn234, Asn303, Asn324, and Asn341. Disulfide bonds link Cys346–Cys377 and Cys366–Cys379. Positions 346-395 (CVFWVEDPTLSSPGHWSSAGCETVRRETQTSCFCNHLTYFAVLMVSSVEV) are GPS. The interval 384–397 (YFAVLMVSSVEVDA) is stachel. A helical transmembrane segment spans residues 403–423 (LSLLSYVGCVVSALACIVTIA). Residues 424–442 (AYLCSRRKPRDYTIKVHMN) are Cytoplasmic-facing. A helical membrane pass occupies residues 443–463 (LLLAVFLLDTSFLLSEPVALT). At 464-470 (GSEAGCR) the chain is on the extracellular side. The chain crosses the membrane as a helical span at residues 471–491 (ASAIFLHFSLLACLSWMGLEG). The Cytoplasmic segment spans residues 492–512 (YNLYRLVVEVFGTYVPGYLLK). The chain crosses the membrane as a helical span at residues 513 to 533 (LSAMGWGFPIFLVTLVALVDV). The Extracellular portion of the chain corresponds to 534 to 570 (DNYGPIILAVHRTPEGVIYPSMCWIRDSLVSYITNLG). The helical transmembrane segment at 571–591 (LFSLVFLFNMAMLATMVVQIL) threads the bilayer. Residues 592–603 (RLRPHTQKWSHV) are Cytoplasmic-facing. Residues 604-624 (LTLLGLSLVLGLPWALIFFSF) form a helical membrane-spanning segment. The Extracellular segment spans residues 625–630 (ASGTFQ). A helical transmembrane segment spans residues 631-651 (LVVLYLFSIITSFQGFLIFIW). At 652 to 687 (YWSMRLQARGGPSPLKSNSDSARLPISSGSTSSSRI) the chain is on the cytoplasmic side. The segment at 664 to 687 (SPLKSNSDSARLPISSGSTSSSRI) is disordered. A compositionally biased stretch (low complexity) spans 678–687 (SSGSTSSSRI).

The protein belongs to the G-protein coupled receptor 2 family. LN-TM7 subfamily. In terms of assembly, heterodimer of 2 chains generated by proteolytic processing; the large extracellular N-terminal fragment (ADGRG1 NT) and the membrane-bound C-terminal fragment (ADGRG1-CT) predominantly remain associated and non-covalently linked. ADGRG1 NT self-associates in a trans-trans manner; the homophilic interaction enhances receptor signaling. Interacts with TGM2. Interacts with heparin; leading to the reduction of ADGRG1 shedding. Interacts with COL3A1. Part of a GPCR-tetraspanin complex at least consisting of ADGRG1, CD81, eventually CD9, and GNA11 in which CD81 is enhancing the association of ADGRG1 with GNA11. Post-translationally, autoproteolytically cleaved into 2 fragments; the large extracellular N-terminal fragment (ADGRG1 NT) and the membrane-bound C-terminal fragment (ADGRG1 CT) predominantly remain associated and non-covalently linked. Shedding to yield the secreted ADGRG1 N-terminal fragment seems to involve metalloprotease(s). In terms of processing, ubiquitinated. Undergoes polyubiquitination upon activation.

It localises to the cell membrane. Its subcellular location is the secreted. It is found in the membrane raft. Forms a heterodimer of 2 chains generated by proteolytic processing that remain associated through non-covalent interactions mediated by the GAIN-B domain. In the inactivated receptor, the Stachel sequence (also named stalk) is embedded in the GAIN-B domain, where it adopts a beta-strand conformation. On activation, the Stachel moves into the 7 transmembrane region and adopts a twisted hook-shaped configuration that forms contacts within the receptor, leading to coupling of a G-alpha protein, which activates signaling. The cleaved GAIN-B and N-terminal domains can then dissociate from the rest of the receptor. In terms of biological role, adhesion G-protein coupled receptor (aGPCR) for steroid hormone 17alpha-hydroxypregnenolone (17-OH), which is involved in cell adhesion and cell-cell interactions. Ligand binding causes a conformation change that triggers signaling via guanine nucleotide-binding proteins (G proteins) and modulates the activity of downstream effectors, such as RhoA pathway. ADGRG1 is coupled to G(12) and/or G(13) G proteins (GNA12 and GNA13, respectively) and mediates the activation Rho small GTPases. Acts as a potent suppressor of ferroptosis: binding to 17-OH-binding initiates signaling that down-regulates CD36 and alleviates ferroptosis-induced liver injury. Ligand-binding also induces cell adhesion activity via association with proteins such as collagen III/COL3A1 and TGM2. Mediates cell matrix adhesion in developing neurons and hematopoietic stem cells. Involved in cortical development, specifically in maintenance of the pial basement membrane integrity and in cortical lamination: association with COL3A1 in the developing brain inhibits neuronal migration via activation of the RhoA pathway. Together with TGM2, acts as a regulator of myelination and myelin repair in oligodendrocyte precursor cells. Acts as a hemostatic sensor of shear force: G protein-coupled receptor signaling is activated in response to shear force in platelets, promoting G(13) G protein signaling, and platelet shape change and aggregation in a COL3A1-dependent manner. Acts as an inhibitor of VEGFA production thereby inhibiting angiogenesis through a signaling pathway mediated by PRKCA. Plays a role in the maintenance of hematopoietic stem cells in bone marrow niche. Plays an essential role in testis development. This is Adhesion G-protein coupled receptor G1 (ADGRG1) from Gorilla gorilla gorilla (Western lowland gorilla).